The sequence spans 58 residues: Rho-conotoxin TIA (58 aa).

An N-terminal signal peptide occupies residues 1 to 16; that stretch reads MFTVFLLVVLATTGVS. The propeptide occupies 17 to 38; sequence FTLDRASDGGNAVAKKSDVTAR. The interaction with ADRA1B stretch occupies residues 40 to 42; that stretch reads NWR. Intrachain disulfides connect cysteine 43-cysteine 49 and cysteine 44-cysteine 57. The lacks the Ser-Xaa-Pro motif that is crucial for potent interaction with nAChR stretch occupies residues 45-47; sequence LIP. Cysteine 57 carries the cysteine amide modification.

It belongs to the conotoxin A superfamily. In terms of tissue distribution, expressed by the venom duct.

It localises to the secreted. Its function is as follows. Allosteric inhibitor of alpha-1B adrenergic receptors (ADRA1B). Binds to an allosteric modulatory site on transmembrane helix 6 and 7 at the base of extracellular loop 3 of ADRA1B. Also weakly inhibits alpha-1A (ADRA1A) and alpha-1D (ADRA1D) adrenergic receptors in a competitive manner. Potently inhibits contractions of vas deferens, spleen and aorta in response to noradrenaline. May also inhibits nicotinic acetylcholine receptors with a possible distinct nAChR binding mode from other alpha-conotoxins, due to a different three residue motif (lacks the Ser-Xaa-Pro motif). The polypeptide is Rho-conotoxin TIA (Conus tulipa (Fish-hunting cone snail)).